A 336-amino-acid polypeptide reads, in one-letter code: NADH-quinone oxidoreductase subunit H (336 aa).

The next 8 helical transmembrane spans lie at 4 to 24 (YILWTSLYVLLIVIPLILVVA), 75 to 95 (YLFFIAPILAFAPAYAAWAVI), 108 to 128 (LGLLYILAMTSFSIYGIVIAG), 154 to 174 (MGFAIVGVVIAAGSMGITGII), 181 to 201 (IWHWYFISLFPLFIVYFIAGI), 233 to 253 (LFFLAEYANMILISILTSIMF), 272 to 292 (FVPGVVWLFAKTGIFMFMFLW), and 308 to 328 (LGWKIFIPLTFVWVVIVACMV).

Belongs to the complex I subunit 1 family. In terms of assembly, NDH-1 is composed of 14 different subunits. Subunits NuoA, H, J, K, L, M, N constitute the membrane sector of the complex.

It is found in the cell inner membrane. It carries out the reaction a quinone + NADH + 5 H(+)(in) = a quinol + NAD(+) + 4 H(+)(out). NDH-1 shuttles electrons from NADH, via FMN and iron-sulfur (Fe-S) centers, to quinones in the respiratory chain. The immediate electron acceptor for the enzyme in this species is believed to be ubiquinone. Couples the redox reaction to proton translocation (for every two electrons transferred, four hydrogen ions are translocated across the cytoplasmic membrane), and thus conserves the redox energy in a proton gradient. This subunit may bind ubiquinone. This Francisella tularensis subsp. mediasiatica (strain FSC147) protein is NADH-quinone oxidoreductase subunit H.